Here is a 465-residue protein sequence, read N- to C-terminus: Ras GTPase-activating protein-binding protein 1 (465 aa).

Residues 11 to 133 enclose the NTF2 domain; it reads VGREFVRQYY…FYVHNDIFRY (123 aa). Residues Lys-36, Lys-50, Lys-59, Lys-64, Lys-76, and Lys-123 each participate in a glycyl lysine isopeptide (Lys-Gly) (interchain with G-Cter in ubiquitin) cross-link. The tract at residues 142-224 is acidic disordered region; it reads VTEPQEESEE…EAALEEAAPD (83 aa). At Thr-143 the chain carries Phosphothreonine. The segment at 144-330 is disordered; that stretch reads EPQEESEEEV…GEPGDVEPRR (187 aa). Composition is skewed to acidic residues over residues 145–157 and 184–205; these read PQEESEEEVEEPE and EHLEEPVVEPEPEPEPEPEPEP. Ser-149 carries the post-translational modification Phosphoserine. A phosphoserine mark is found at Ser-231, Ser-248, and Ser-251. Over residues 248 to 257 the composition is skewed to polar residues; it reads SWASVTSKNL. 2 stretches are compositionally biased toward basic and acidic residues: residues 295-305 and 316-330; these read PQRDQRVREQR and PIREAGEPGDVEPRR. Residues 338 to 413 form the RRM domain; it reads HQLFIGNLPH…VRLNVEEKKT (76 aa). Glycyl lysine isopeptide (Lys-Gly) (interchain with G-Cter in ubiquitin) cross-links involve residues Lys-351 and Lys-355. Ser-371 is modified (phosphoserine). A Glycyl lysine isopeptide (Lys-Gly) (interchain with G-Cter in ubiquitin) cross-link involves residue Lys-374. Lys-374 is subject to N6-acetyllysine; alternate. Lys-374 is covalently cross-linked (Glycyl lysine isopeptide (Lys-Gly) (interchain with G-Cter in SUMO2); alternate). A Glycyl lysine isopeptide (Lys-Gly) (interchain with G-Cter in ubiquitin); alternate cross-link involves residue Lys-391. An RG-rich region region spans residues 408 to 464; that stretch reads VEEKKTRAAREGDRRDNRLRGPGGPRGGPSGGMRGPPRGGMVQKPGFGVGRGITTPR. The span at 411 to 426 shows a compositional bias: basic and acidic residues; sequence KKTRAAREGDRRDNRL. A disordered region spans residues 411–465; sequence KKTRAAREGDRRDNRLRGPGGPRGGPSGGMRGPPRGGMVQKPGFGVGRGITTPRQ. At Arg-427 the chain carries Asymmetric dimethylarginine. Residues 428–445 are compositionally biased toward gly residues; it reads GPGGPRGGPSGGMRGPPR. Arg-433 is subject to Asymmetric dimethylarginine; alternate. Omega-N-methylarginine; alternate occurs at positions 433, 445, 458, and 464. Arg-458 is subject to Dimethylated arginine; alternate.

Homodimer and oligomer. Component of a TAU mRNP complex, at least composed of IGF2BP1, ELAVL4 and G3BP1. Binds to the SH3 domain of Ras GTPase-activating protein (RASA1) in proliferating cells. No interaction in quiescent cells. Interacts (via NTF2 domain) with USP10; inhibiting stress granule formation by lowering G3BP1 valence. Interacts (via NTF2 domain) with CAPRIN1; promoting stress granule formation by lowering the saturation-concentration of G3BP1. Interacts (via NTF2 domain) with UBAP2L; promoting stress granule formation. Associates (via RG-rich region) with 40S ribosome subunits. Interacts with RPTOR and SPAG5; this complex is increased by oxidative stress. Interacts with ATXN2L. Interacts with STYXL1. Interacts with CGAS (via N-terminus); this interaction promotes the DNA-binding and activation of CGAS. Interacts (via C-terminus) with RIGI. Interacts with PABPC1. Interacts with QKI (isoforms QKI6 and QKI7); directing N(7)-methylguanine-containing mRNAs to stress granules. The cofactor is Mg(2+). In terms of processing, phosphorylation of the acidic disordered region regulates stress granule assembly. RASA1-dependent phosphorylation of Ser-149 induces a conformational change that prevents self-association. Dephosphorylation after HRAS activation is required for stress granule assembly. Ser-149 phosphorylation induces partial nuclear localization. Arg-435 is dimethylated, probably to asymmetric dimethylarginine. Post-translationally, ubiquitinated by TRIM21 via 'Lys-63'-linked polyubiquitination in the NTF2 domain in response to heat shock, leading to stress granule disassembly: ubiquitination promotes interaction with the FAF2 adapter, followed by interaction with VCP, which extracts G3BP1 from stress granules, leading to stress granule disassembly. In case of prolonged stress, ubiquitination by TRIM21 leads to autophagy-dependent degradation of G3BP1 via recruitment of ubiquitinated G3BP1 by SQSTM1 and/or CALCOCO2 to autophagosomes. In terms of tissue distribution, ubiquitous.

Its subcellular location is the cytoplasm. It is found in the cytosol. The protein localises to the perikaryon. It localises to the stress granule. The protein resides in the nucleus. It catalyses the reaction ATP + H2O = ADP + phosphate + H(+). Under physiological conditions, G3BP1 adopts a compact state that is stabilized by intramolecular interactions between the RG-rich and the acidic regions that inhibit phase separation. Upon stress, polysomes disassemble and mRNAs are released in an unfolded protein-free state. Binding of unfolded mRNA to G3BP1 outcompetes the intramolecular interactions and RNA-bound G3BP1 adopts an expanded conformation in which the RG-rich region becomes exposed to engage in protein-protein and protein-RNA interactions, allowing physical cross-linking of RNA molecules to form protein-RNA condensates, leading to liquid-liquid phase separation (LLPS). Functionally, protein involved in various processes, such as stress granule formation and innate immunity. Plays an essential role in stress granule formation. Stress granules are membraneless compartments that store mRNAs and proteins, such as stalled translation pre-initiation complexes, in response to stress. Promotes formation of stress granules phase-separated membraneless compartment by undergoing liquid-liquid phase separation (LLPS) upon unfolded RNA-binding: functions as a molecular switch that triggers RNA-dependent LLPS in response to a rise in intracellular free RNA concentrations. Also acts as an ATP- and magnesium-dependent helicase: unwinds DNA/DNA, RNA/DNA, and RNA/RNA substrates with comparable efficiency. Acts unidirectionally by moving in the 5' to 3' direction along the bound single-stranded DNA. Unwinds preferentially partial DNA and RNA duplexes having a 17 bp annealed portion and either a hanging 3' tail or hanging tails at both 5'- and 3'-ends. Plays an essential role in innate immunity by promoting CGAS and RIGI activity. Participates in the DNA-triggered cGAS/STING pathway by promoting the DNA binding and activation of CGAS. Triggers the condensation of cGAS, a process probably linked to the formation of membrane-less organelles. Also enhances RIGI-induced type I interferon production probably by helping RIGI at sensing pathogenic RNA. May also act as a phosphorylation-dependent sequence-specific endoribonuclease in vitro: Cleaves exclusively between cytosine and adenine and cleaves MYC mRNA preferentially at the 3'-UTR. This Mus musculus (Mouse) protein is Ras GTPase-activating protein-binding protein 1 (G3bp1).